Here is a 902-residue protein sequence, read N- to C-terminus: Viral-enhancing factor (902 aa).

The 304-residue stretch at 27 to 330 (HRRTEVGVVL…IFAWLYNPQR (304 aa)) folds into the Peptidase M60 domain. 10 N-linked (GlcNAc...) asparagine; by host glycosylation sites follow: Asn-73, Asn-265, Asn-278, Asn-339, Asn-540, Asn-593, Asn-594, Asn-620, Asn-782, and Asn-840.

Involved in disruption of the peritrophic membrane and fusion of nucleocapsids with midgut cells. This chain is Viral-enhancing factor (VEF), found in Heliothis (HaGV).